The following is a 361-amino-acid chain: Feruloyl CoA ortho-hydroxylase 1 (361 aa).

The Fe2OG dioxygenase domain maps to 204-312 (TKESLFMGSI…RISVPIFVNP (109 aa)). 2-oxoglutarate is bound at residue Tyr-220. Positions 235, 237, and 293 each coordinate Fe cation. Residues Arg-303 and Ser-305 each contribute to the 2-oxoglutarate site.

The protein belongs to the iron/ascorbate-dependent oxidoreductase family. L-ascorbate is required as a cofactor. Requires Fe(2+) as cofactor. In terms of tissue distribution, highly expressed in roots, especially in the cortex.

The enzyme catalyses (E)-feruloyl-CoA + 2-oxoglutarate + O2 = (E)-6-hydroxyferuloyl-CoA + succinate + CO2. It catalyses the reaction (E)-6-hydroxyferuloyl-CoA = scopoletin + CoA. It participates in phenylpropanoid metabolism. In terms of biological role, 2-oxoglutarate (OG)- and Fe(II)-dependent dioxygenase (2OGD) involved in scopoletin biosynthesis. Converts feruloyl CoA into 6'-hydroxyferuloyl CoA but has no activity with ferulic acid, feruloylquinic acid, caffeic acid, caffeoyl CoA, p-coumaric acid, cinnamic acid, cinnamoyl CoA or benzoyl CoA. Required for the production and secretion of compounds (e.g. fluorescent coumarins) that facilitate the mobilization and uptake of iron from sources with low bioavailability or in high pH-induced iron deficiency conditions. Involved in the pathway of sideretin biosynthesis from feruloyl CoA, a redox-active catecholic metabolite exuded by roots in response to iron deficiency in order to facilitate the uptake of iron; this pathway consists in the successive conversion from feruloyl CoA to scopoletin, from scopoletin to fraxetin and from fraxetin to sideretin. Catalyzes the biosynthesis of scopoletin from feruloyl CoA. In Arabidopsis thaliana (Mouse-ear cress), this protein is Feruloyl CoA ortho-hydroxylase 1.